The chain runs to 125 residues: uncharacterized protein (125 aa).

The helical transmembrane segment at 21–43 (KFSLIALVSFTALAIIVLYHNIS) threads the bilayer.

Its subcellular location is the membrane. This is an uncharacterized protein from Archaeoglobus fulgidus (strain ATCC 49558 / DSM 4304 / JCM 9628 / NBRC 100126 / VC-16).